Here is a 490-residue protein sequence, read N- to C-terminus: POC1 centriolar protein homolog B (490 aa).

WD repeat units lie at residues 16-55 (GHKDVISCADFNPNNKQLATGSCDKSLMIWNLAPKARAFR), 58-97 (GHTDVITGVNFAPSGSLVASSSRDQTVRLWTPSIKGESTV), 100-139 (AHTASVRSVHFSRDGQRLVTASDDKSVKVWGVERKKFLYS), 142-181 (RHTNWVRCARFSPDGRLIASCGDDRTVRLWDTSSHQCINI), 184-223 (DYGGSATFVDFNSSGTCIASSGADNTIKIWDIRTNKLIQH), 226-265 (VHNAGVNCFSFHPSGNYLISGSSDSTIKILDLLEGRLIYT), and 268-307 (GHKGPVLTVTFSRDGDLFASGGADSQVLMWKTNFDSLNYR). The segment covering 375–388 (DGASSSRAQFTSGM) has biased composition (polar residues). A disordered region spans residues 375–427 (DGASSSRAQFTSGMDSGPFRTHTQAREEEDENQEERFAGGMTASPAERSGIPS). Residues 431-463 (STLENIVQQLDILTQTVAVLEERLTLTEDKLRT) adopt a coiled-coil conformation.

It belongs to the WD repeat POC1 family.

The protein resides in the cytoplasm. The protein localises to the cytoskeleton. It is found in the microtubule organizing center. It localises to the centrosome. Its subcellular location is the centriole. Its function is as follows. Plays an important role in centriole assembly and/or stability and ciliogenesis. Involved in early steps of centriole duplication, as well as in the later steps of centriole length control. This is POC1 centriolar protein homolog B from Danio rerio (Zebrafish).